The following is a 184-amino-acid chain: Ribosome-recycling factor (184 aa).

The disordered stretch occupies residues 137–158 (DSIKAKQKDGIPEDEAKRGQDE).

The protein belongs to the RRF family.

Its subcellular location is the cytoplasm. Its function is as follows. Responsible for the release of ribosomes from messenger RNA at the termination of protein biosynthesis. May increase the efficiency of translation by recycling ribosomes from one round of translation to another. In Desulforamulus reducens (strain ATCC BAA-1160 / DSM 100696 / MI-1) (Desulfotomaculum reducens), this protein is Ribosome-recycling factor.